Here is a 366-residue protein sequence, read N- to C-terminus: Carbamoyl phosphate synthase small chain (366 aa).

The segment at 1–171 is CPSase; it reads MLEKRYLVLE…KTPYVSTGSD (171 aa). L-glutamine contacts are provided by Ser-47, Gly-221, and Gly-223. Residues 173-360 enclose the Glutamine amidotransferase type-1 domain; sequence SVVLLDFGKK…IAMMKDFKEK (188 aa). The Nucleophile role is filled by Cys-248. Residues Leu-249, Gln-252, Asn-290, Gly-292, and Tyr-293 each coordinate L-glutamine. Catalysis depends on residues His-333 and Glu-335.

This sequence belongs to the CarA family. In terms of assembly, composed of two chains; the small (or glutamine) chain promotes the hydrolysis of glutamine to ammonia, which is used by the large (or ammonia) chain to synthesize carbamoyl phosphate. Tetramer of heterodimers (alpha,beta)4.

The catalysed reaction is hydrogencarbonate + L-glutamine + 2 ATP + H2O = carbamoyl phosphate + L-glutamate + 2 ADP + phosphate + 2 H(+). It carries out the reaction L-glutamine + H2O = L-glutamate + NH4(+). The protein operates within amino-acid biosynthesis; L-arginine biosynthesis; carbamoyl phosphate from bicarbonate: step 1/1. It functions in the pathway pyrimidine metabolism; UMP biosynthesis via de novo pathway; (S)-dihydroorotate from bicarbonate: step 1/3. Small subunit of the glutamine-dependent carbamoyl phosphate synthetase (CPSase). CPSase catalyzes the formation of carbamoyl phosphate from the ammonia moiety of glutamine, carbonate, and phosphate donated by ATP, constituting the first step of 2 biosynthetic pathways, one leading to arginine and/or urea and the other to pyrimidine nucleotides. The small subunit (glutamine amidotransferase) binds and cleaves glutamine to supply the large subunit with the substrate ammonia. The chain is Carbamoyl phosphate synthase small chain from Staphylococcus epidermidis (strain ATCC 12228 / FDA PCI 1200).